Reading from the N-terminus, the 89-residue chain is Small ribosomal subunit protein uS15 (89 aa).

The protein belongs to the universal ribosomal protein uS15 family. In terms of assembly, part of the 30S ribosomal subunit. Forms a bridge to the 50S subunit in the 70S ribosome, contacting the 23S rRNA.

One of the primary rRNA binding proteins, it binds directly to 16S rRNA where it helps nucleate assembly of the platform of the 30S subunit by binding and bridging several RNA helices of the 16S rRNA. In terms of biological role, forms an intersubunit bridge (bridge B4) with the 23S rRNA of the 50S subunit in the ribosome. The protein is Small ribosomal subunit protein uS15 of Edwardsiella ictaluri (strain 93-146).